We begin with the raw amino-acid sequence, 290 residues long: Diaminopimelate epimerase (290 aa).

Substrate-binding residues include asparagine 17, glutamine 49, and asparagine 69. The active-site Proton donor is cysteine 78. Residues 79–80 (GN), asparagine 166, asparagine 199, and 217–218 (ER) each bind substrate. The active-site Proton acceptor is cysteine 226. 227-228 (GS) lines the substrate pocket.

It belongs to the diaminopimelate epimerase family. In terms of assembly, homodimer.

The protein localises to the cytoplasm. It catalyses the reaction (2S,6S)-2,6-diaminopimelate = meso-2,6-diaminopimelate. Its pathway is amino-acid biosynthesis; L-lysine biosynthesis via DAP pathway; DL-2,6-diaminopimelate from LL-2,6-diaminopimelate: step 1/1. Its function is as follows. Catalyzes the stereoinversion of LL-2,6-diaminopimelate (L,L-DAP) to meso-diaminopimelate (meso-DAP), a precursor of L-lysine and an essential component of the bacterial peptidoglycan. This chain is Diaminopimelate epimerase, found in Afipia carboxidovorans (strain ATCC 49405 / DSM 1227 / KCTC 32145 / OM5) (Oligotropha carboxidovorans).